The chain runs to 444 residues: MAERKYFGTDGVRGKVGQFPITPDFALKLGWAAGKILATQGTKQVLIGKDTRISGYMLESALEAGLAAAGLSAAFVGPMPTPAIAYLTRTFRAEAGIVISASHNPYYDNGIKFFSSVGEKLPDEVEEAIEALLDQPMDCVESAQLGKAMRINDAAGRYIEFCKGTFPANASLKGYKIVVDCANGATYHIAPNVMRELGAEVIEIGTKPDGLNINEKCGATDIKALQKVVVESGADVGLAYDGDGDRIMMVDHLGNKVDGDQILFIIAREALRSGKLHGGVVGTLMSNMGLEVALKHLAIPFTRANVGDRYVLEQLKEKGWKLGGENSGHIIVLDKNTTGDGIIASLEVLAAMEAHKMSLNDLARAVPLFPQVLINVRFEGGKNPLESDAVKAVAADVEKRLAGRGRILLRKSGTEPLIRVMVECEDGALAQSCAEEIVEAVKSN.

Residue serine 102 is the Phosphoserine intermediate of the active site. Positions 102, 241, 243, and 245 each coordinate Mg(2+). Serine 102 carries the post-translational modification Phosphoserine.

This sequence belongs to the phosphohexose mutase family. Requires Mg(2+) as cofactor. Post-translationally, activated by phosphorylation.

The catalysed reaction is alpha-D-glucosamine 1-phosphate = D-glucosamine 6-phosphate. In terms of biological role, catalyzes the conversion of glucosamine-6-phosphate to glucosamine-1-phosphate. The protein is Phosphoglucosamine mutase of Actinobacillus pleuropneumoniae serotype 7 (strain AP76).